The primary structure comprises 500 residues: Beta-glucosidase 30 (500 aa).

The first 25 residues, 1 to 25, serve as a signal peptide directing secretion; it reads MGIRMGRRLLFTLFLGALFCNGVYA. Glutamine 46 contacts a beta-D-glucoside. Asparagine 63 and asparagine 114 each carry an N-linked (GlcNAc...) asparagine glycan. Residues histidine 149 and 194-195 contribute to the a beta-D-glucoside site; that span reads NE. The Proton donor role is filled by glutamate 195. The cysteines at positions 214 and 222 are disulfide-linked. Tyrosine 338 lines the a beta-D-glucoside pocket. The N-linked (GlcNAc...) asparagine glycan is linked to asparagine 363. Residue glutamate 409 participates in a beta-D-glucoside binding. Glutamate 409 (nucleophile) is an active-site residue. 2 N-linked (GlcNAc...) asparagine glycosylation sites follow: asparagine 416 and asparagine 417. Residues tryptophan 456, 463–464, and phenylalanine 472 each bind a beta-D-glucoside; that span reads EW.

The protein belongs to the glycosyl hydrolase 1 family.

It carries out the reaction Hydrolysis of terminal, non-reducing beta-D-glucosyl residues with release of beta-D-glucose.. The polypeptide is Beta-glucosidase 30 (BGLU30) (Oryza sativa subsp. japonica (Rice)).